The sequence spans 331 residues: UPF0324 membrane protein SAS0317 (331 aa).

11 helical membrane-spanning segments follow: residues 9-26 (FMIG…SFLA), 31-48 (ILDK…AILY), 69-88 (LLRF…DIIG), 93-115 (LLAI…NKLL), 122-144 (ALLL…APIF), 154-176 (SIGI…YAIF), 183-202 (YGAW…LAGG), 217-234 (LGRV…ILIM), 247-269 (ISIP…VTIP), 273-295 (LNIL…GLNV), and 308-330 (LMTI…HWLY).

It belongs to the UPF0324 family.

The protein localises to the cell membrane. The protein is UPF0324 membrane protein SAS0317 of Staphylococcus aureus (strain MSSA476).